The primary structure comprises 504 residues: Probable chlorophyll(ide) b reductase NYC1, chloroplastic (504 aa).

The N-terminal 33 residues, 1–33 (MAAAAVVHLSVHGRLRRSPELHARPYHRPSLLR), are a transit peptide targeting the chloroplast. The segment at 41 to 63 (ADNGGEEASSSPPPPTTAEARRR) is disordered. 2 helical membrane-spanning segments follow: residues 114–134 (YVIT…LSGG) and 141–161 (LIWY…ANSV). 175-199 (ITGSTRGLGKALAREFLLSGDRVVI) is an NAD(+) binding site. The active-site Proton acceptor is tyrosine 339. The chain crosses the membrane as a helical span at residues 479-499 (WVSVFSLSVVCAFIILSSSGG).

Belongs to the short-chain dehydrogenases/reductases (SDR) family. Interacts with NOL to form a complex that acts as a chlorophyll b reductase. Expressed in leaves and stems. Also detected in non-photosynthetic tissues such as roots.

It localises to the plastid. Its subcellular location is the chloroplast thylakoid membrane. The catalysed reaction is 7(1)-hydroxychlorophyllide a + NAD(+) = chlorophyllide b + NADH + H(+). It catalyses the reaction 7(1)-hydroxychlorophyllide a + NADP(+) = chlorophyllide b + NADPH + H(+). Its function is as follows. Required for proper chloroplast degradation. Involved in chlorophyll b degradation. In Oryza sativa subsp. japonica (Rice), this protein is Probable chlorophyll(ide) b reductase NYC1, chloroplastic (NYC1).